The primary structure comprises 559 residues: Pentatricopeptide repeat-containing protein At1g08610 (559 aa).

PPR repeat units follow at residues 103–137 (DEET…NQVP), 138–172 (HFPS…GGVP), 173–207 (DTIT…GSPP), 208–242 (DVIT…GCPP), 243–277 (FMIT…GCYP), 278–312 (DIVT…GLEL), 313–347 (NTVT…SYCP), 348–382 (TVIT…KCLP), 383–417 (DIVT…CCPP), 418–452 (GLIT…GIFP), 453–487 (DDIT…GNGI), 488–522 (RGST…GCKP), and 523–557 (DETI…KLLK).

This sequence belongs to the PPR family. P subfamily.

The chain is Pentatricopeptide repeat-containing protein At1g08610 from Arabidopsis thaliana (Mouse-ear cress).